The sequence spans 512 residues: MYAVNPIECIHLKDEYDTCINKSIFDKDLKITKCHACNDESENWICMTCGVVSCSRHVNGHAGEHFENTKHPISASFSDHSFWCYTCDTYVHNTPLFDICEILENIKSSNKKDKIVPKKDQKEEEEEDQVVPSASITTSSTTTSISKQTTVNNTTTTSSSSTTTTTTTTSTTINNNEEEEESESETDESSSEGEESLSLIQRMREMIFGVGRGPKIVAPSEQEESEEDESCVLKKPTIEEIAKYINSAKCKNIIVMTGAGISVAAGIPDFRSPKTGLYEKLDKYDLPYREAIFDIEYFKKNPKPFYVLSKELFPGSFNPTTVHYFIKLLSDKGLLLRNFTQNIDTLERIAGIPANKLVEAHGSFATSHCVSCKKEYSTEYVKERIFKDELPECTETSGCKGIVKPDIVFFGESLPSRFNDCAREDFTKCDLLLVIGTSLKVHPFASLINFAKGCPRVLINFEEVGTNPYGGFKFNQPSNKLDVKCIGDCQTLVLDLIKLLGWENEFNQIVKN.

Residues 7 to 110 (IECIHLKDEY…EILENIKSSN (104 aa)) form a UBP-type zinc finger. 12 residues coordinate Zn(2+): Cys-9, His-11, Cys-34, Cys-37, Cys-46, Cys-49, Cys-54, His-61, His-65, His-71, Cys-84, and Cys-87. Over residues 113 to 122 (DKIVPKKDQK) the composition is skewed to basic and acidic residues. Residues 113 to 196 (DKIVPKKDQK…DESSSEGEES (84 aa)) are disordered. The span at 130 to 175 (VVPSASITTSSTTTSISKQTTVNNTTTTSSSSTTTTTTTTSTTINN) shows a compositional bias: low complexity. The segment covering 176-195 (NEEEEESESETDESSSEGEE) has biased composition (acidic residues). One can recognise a Deacetylase sirtuin-type domain in the interval 231–503 (CVLKKPTIEE…LDLIKLLGWE (273 aa)). His-361 functions as the Proton acceptor in the catalytic mechanism. 4 residues coordinate Zn(2+): Cys-369, Cys-372, Cys-393, and Cys-399.

The protein belongs to the sirtuin family. Requires Zn(2+) as cofactor.

It catalyses the reaction N(6)-acetyl-L-lysyl-[protein] + NAD(+) + H2O = 2''-O-acetyl-ADP-D-ribose + nicotinamide + L-lysyl-[protein]. Its function is as follows. NAD-dependent deacetylase, which plays an important role in the regulation of transcriptional repression. This is NAD-dependent deacetylase sir2A (sir2A) from Dictyostelium discoideum (Social amoeba).